A 154-amino-acid chain; its full sequence is SsrA-binding protein (154 aa).

It belongs to the SmpB family.

The protein localises to the cytoplasm. Required for rescue of stalled ribosomes mediated by trans-translation. Binds to transfer-messenger RNA (tmRNA), required for stable association of tmRNA with ribosomes. tmRNA and SmpB together mimic tRNA shape, replacing the anticodon stem-loop with SmpB. tmRNA is encoded by the ssrA gene; the 2 termini fold to resemble tRNA(Ala) and it encodes a 'tag peptide', a short internal open reading frame. During trans-translation Ala-aminoacylated tmRNA acts like a tRNA, entering the A-site of stalled ribosomes, displacing the stalled mRNA. The ribosome then switches to translate the ORF on the tmRNA; the nascent peptide is terminated with the 'tag peptide' encoded by the tmRNA and targeted for degradation. The ribosome is freed to recommence translation, which seems to be the essential function of trans-translation. This Staphylococcus saprophyticus subsp. saprophyticus (strain ATCC 15305 / DSM 20229 / NCIMB 8711 / NCTC 7292 / S-41) protein is SsrA-binding protein.